Here is a 270-residue protein sequence, read N- to C-terminus: Urease accessory protein UreD (270 aa).

The protein belongs to the UreD family. As to quaternary structure, ureD, UreF and UreG form a complex that acts as a GTP-hydrolysis-dependent molecular chaperone, activating the urease apoprotein by helping to assemble the nickel containing metallocenter of UreC. The UreE protein probably delivers the nickel.

It localises to the cytoplasm. Required for maturation of urease via the functional incorporation of the urease nickel metallocenter. This Klebsiella pneumoniae protein is Urease accessory protein UreD.